We begin with the raw amino-acid sequence, 420 residues long: Protein translocase subunit SecY (420 aa).

The next 10 helical transmembrane spans lie at 9-29 (ILIT…PIPG), 61-81 (LSII…MELL), 104-124 (IVRY…SVGL), 141-161 (VFMI…MWIG), 173-193 (ISLI…SGTF), 203-223 (ILML…IIYV), 257-277 (LSGV…STIL), 300-320 (YNIL…SIVF), 355-375 (KLTL…WILV), and 377-397 (AMGV…QVAI).

The protein belongs to the SecY/SEC61-alpha family. In terms of assembly, component of the Sec protein translocase complex. Heterotrimer consisting of SecY, SecE and SecG subunits. The heterotrimers can form oligomers, although 1 heterotrimer is thought to be able to translocate proteins. Interacts with the ribosome. Interacts with SecDF, and other proteins may be involved. Interacts with SecA.

The protein resides in the cell inner membrane. The central subunit of the protein translocation channel SecYEG. Consists of two halves formed by TMs 1-5 and 6-10. These two domains form a lateral gate at the front which open onto the bilayer between TMs 2 and 7, and are clamped together by SecE at the back. The channel is closed by both a pore ring composed of hydrophobic SecY resides and a short helix (helix 2A) on the extracellular side of the membrane which forms a plug. The plug probably moves laterally to allow the channel to open. The ring and the pore may move independently. In Helicobacter pylori (strain ATCC 700392 / 26695) (Campylobacter pylori), this protein is Protein translocase subunit SecY.